The chain runs to 445 residues: MSNFTKSSSFNRRALSSLAIESPRNSSSSVFTSPIGSAFASPRSQNFGGSPRPSTNRLKEISYLFQVLIIAGTIVSFLVIIAGGYLYVVPSLGQTFLGYNGALEFNSSVVGDTECDIFDGNWVVDDNYPLYNASECPFVEKGFNCLGNGRGHDEYLKWRWKPKHCTVPRFEVRDVLKRLRGKRIVFVGDSMSRTQWESLICMLMTGLEDKRSVYEVNGNNITKRIRFLGVRFSSYNFTVEFYRSVFLVQPGRLRWHAPKRVKSTLKLDVLDVINHEWSSADFLIFNTGQWWVPGKLFETGCYFQVGNSLRLGMSIPAAYRVALETWASWIESTVDPNKTRVLFRTFEPSHWSDHRSCNVTKYPAPDTEGRDKSIFSEMIKEVVKNMTIPVSILDVTSMSAFRSDGHVGLWSDNPLVPDCSHWCLPGVPDIWNEILLFFLFRQPVQ.

The chain crosses the membrane as a helical; Signal-anchor for type II membrane protein span at residues 69–89; sequence IIAGTIVSFLVIIAGGYLYVV. Positions 188 to 190 match the GDS motif motif; that stretch reads GDS. The short motif at 418 to 432 is the DCXHWCLPGXXDXWN motif element; sequence DCSHWCLPGVPDIWN.

It belongs to the PC-esterase family. TBL subfamily.

The protein localises to the membrane. Functionally, may act as a bridging protein that binds pectin and other cell wall polysaccharides. Probably involved in maintaining esterification of pectins. May be involved in the specific O-acetylation of cell wall polymers. This Arabidopsis thaliana (Mouse-ear cress) protein is Protein trichome berefringence-like 7 (TBL7).